The following is an 884-amino-acid chain: Probable mixed-linked glucan synthase 9 (884 aa).

Residues 1 to 27 (MALSPAAAGRTGRNNNNDAGLADPLLP) show a composition bias toward low complexity. The tract at residues 1–34 (MALSPAAAGRTGRNNNNDAGLADPLLPAGGGGGG) is disordered. 2 consecutive transmembrane segments (helical) span residues 73–93 (VLLHPYRLLTLVRLIAVVLFL) and 104–124 (AMWLWWISIAGDFWFGVTWLL). D195 is a catalytic residue. Substrate is bound by residues D396 and D398. D565 is an active-site residue. 6 helical membrane passes run 640 to 660 (TAYPVSALFMVVYDLLPVIWL), 672 to 692 (FSTYVAYLVAVIAMIEVIGLV), 708 to 728 (EQFYMIGATGVYLAAVLHIVL), 765 to 785 (LLAPTVVVMAVNVTAIGAAAG), 802 to 822 (AGLVFNVWVLVLLYPFALGIM), and 830 to 850 (CALFALLVAACAAVAAGFVAV).

This sequence belongs to the glycosyltransferase 2 family. Plant cellulose synthase-like F subfamily.

Its subcellular location is the golgi apparatus membrane. Functionally, may catalyze both beta-1,3 and beta-1,4 glycosidic linkage on beta-D-glucan. Essential for (1,3;1,4)-beta-D-glucans synthesis in grasses and cereals (Poaceae). The mixed-linked glucans (which are not present in walls of dicotyledons or most other monocotyledonous plants) are particularly important constituents of the walls of the starchy endosperm and aleurone cells of cereal grains such as oats, wheat, rice and barley. They can account for up to 70% by weight of the wall. This chain is Probable mixed-linked glucan synthase 9 (CSLF9), found in Oryza sativa subsp. japonica (Rice).